The following is a 292-amino-acid chain: Glycine--tRNA ligase alpha subunit (292 aa).

This sequence belongs to the class-II aminoacyl-tRNA synthetase family. Tetramer of two alpha and two beta subunits.

Its subcellular location is the cytoplasm. It catalyses the reaction tRNA(Gly) + glycine + ATP = glycyl-tRNA(Gly) + AMP + diphosphate. The sequence is that of Glycine--tRNA ligase alpha subunit from Clostridioides difficile (strain 630) (Peptoclostridium difficile).